A 196-amino-acid polypeptide reads, in one-letter code: ATP-dependent Clp protease proteolytic subunit (196 aa).

Ser-96 (nucleophile) is an active-site residue. Residue His-121 is part of the active site.

Belongs to the peptidase S14 family. In terms of assembly, fourteen ClpP subunits assemble into 2 heptameric rings which stack back to back to give a disk-like structure with a central cavity, resembling the structure of eukaryotic proteasomes.

It localises to the cytoplasm. The catalysed reaction is Hydrolysis of proteins to small peptides in the presence of ATP and magnesium. alpha-casein is the usual test substrate. In the absence of ATP, only oligopeptides shorter than five residues are hydrolyzed (such as succinyl-Leu-Tyr-|-NHMec, and Leu-Tyr-Leu-|-Tyr-Trp, in which cleavage of the -Tyr-|-Leu- and -Tyr-|-Trp bonds also occurs).. In terms of biological role, cleaves peptides in various proteins in a process that requires ATP hydrolysis. Has a chymotrypsin-like activity. Plays a major role in the degradation of misfolded proteins. In Streptococcus pneumoniae (strain 70585), this protein is ATP-dependent Clp protease proteolytic subunit.